A 191-amino-acid chain; its full sequence is Neurotrophic factor BDNF precursor form (191 aa).

Residues 1–23 (GQGSLAYPGLRTQGNLETLGGPN) are disordered. The propeptide occupies 1–100 (GQGSLAYPGL…AANMSMRVRR (100 aa)). N-linked (GlcNAc...) asparagine glycosylation is present at N93. C113 and C180 are joined by a disulfide.

Belongs to the NGF-beta family.

Its subcellular location is the secreted. Promotes the survival of neuronal populations that are all located either in the central nervous system or directly connected to it. This chain is Neurotrophic factor BDNF precursor form (BDNF), found in Anilius scytale (Coral cylinder snake).